Reading from the N-terminus, the 472-residue chain is tRNA-2-methylthio-N(6)-dimethylallyladenosine synthase (472 aa).

The segment at 1–24 is disordered; it reads MTGTPDVFPPATPGGAPLVALPAG. Residues 33–150 form the MTTase N-terminal domain; that stretch reads GKLYIKTHGC…LPELIRARRE (118 aa). C42, C79, C113, C187, C191, and C194 together coordinate [4Fe-4S] cluster. The region spanning 173–407 is the Radical SAM core domain; that stretch reads RAEGASAFVS…RINAHAAGIS (235 aa). Residues 408–471 enclose the TRAM domain; it reads EKMVGTVQTV…TNSLRARVVA (64 aa).

It belongs to the methylthiotransferase family. MiaB subfamily. Monomer. The cofactor is [4Fe-4S] cluster.

The protein localises to the cytoplasm. It carries out the reaction N(6)-dimethylallyladenosine(37) in tRNA + (sulfur carrier)-SH + AH2 + 2 S-adenosyl-L-methionine = 2-methylsulfanyl-N(6)-dimethylallyladenosine(37) in tRNA + (sulfur carrier)-H + 5'-deoxyadenosine + L-methionine + A + S-adenosyl-L-homocysteine + 2 H(+). Catalyzes the methylthiolation of N6-(dimethylallyl)adenosine (i(6)A), leading to the formation of 2-methylthio-N6-(dimethylallyl)adenosine (ms(2)i(6)A) at position 37 in tRNAs that read codons beginning with uridine. In Stenotrophomonas maltophilia (strain K279a), this protein is tRNA-2-methylthio-N(6)-dimethylallyladenosine synthase.